We begin with the raw amino-acid sequence, 768 residues long: DNA replication licensing factor MCM3 homolog 2 (768 aa).

In terms of domain architecture, MCM spans 290 to 497 (TFDLLGNSLA…IDRQISEHVA (208 aa)). 340 to 347 (GDPSVAKS) serves as a coordination point for ATP. Positions 472–475 (SRFD) match the Arginine finger motif. The span at 661 to 670 (EMKQQADHDA) shows a compositional bias: basic and acidic residues. The segment at 661–689 (EMKQQADHDAGATGGTVDGHGSSGNDPMD) is disordered. Gly residues predominate over residues 672–682 (ATGGTVDGHGS).

Belongs to the MCM family.

It is found in the nucleus. The catalysed reaction is ATP + H2O = ADP + phosphate + H(+). In terms of biological role, acts as a factor that allows the DNA to undergo a single round of replication per cell cycle. Required for DNA replication and cell proliferation. May act as a component of the MCM complex which is the putative replicative helicase of the replication licensing system in eukaryotic cells. This chain is DNA replication licensing factor MCM3 homolog 2 (ROA2), found in Zea mays (Maize).